We begin with the raw amino-acid sequence, 57 residues long: Granulin-3 (57 aa).

2 disulfide bridges follow: cysteine 4/cysteine 16 and cysteine 10/cysteine 26.

It belongs to the granulin family. Granulins are disulfide bridged. In terms of tissue distribution, ubiquitous.

It is found in the secreted. Its function is as follows. Granulins have possible cytokine-like activity. They may play a role in inflammation, wound repair, and tissue remodeling. This chain is Granulin-3, found in Cyprinus carpio (Common carp).